The primary structure comprises 118 residues: Protein RALF-like 24 (118 aa).

Positions 1–22 (MSRSLALVYLSLLCLQTHLSIS) are cleaved as a signal peptide. Positions 23–63 (VTVPIPSVNGEIDAMLNRNGVIGEEEGEEMMPSEISRRVMM) are cleaved as a propeptide — removed in mature form. 2 disulfide bridges follow: C81–C91 and C103–C109.

This sequence belongs to the plant rapid alkalinization factor (RALF) family. Post-translationally, proteolytically cleaved, probably by S1P, a subtilisin-like serine protease (subtilase).

The protein resides in the secreted. In terms of biological role, cell signaling peptide that may regulate plant stress, growth, and development. Mediates a rapid alkalinization of extracellular space by mediating a transient increase in the cytoplasmic Ca(2+) concentration leading to a calcium-dependent signaling events through a cell surface receptor and a concomitant activation of some intracellular mitogen-activated protein kinases. This Arabidopsis thaliana (Mouse-ear cress) protein is Protein RALF-like 24 (RALFL24).